Consider the following 1829-residue polypeptide: Afadin (1829 aa).

One can recognise a Ras-associating 1 domain in the interval F39–D133. The tract at residues K129 to S196 is disordered. Positions E146–R186 form a coiled coil. Residues T160–R172 are compositionally biased toward basic residues. Over residues E173 to Q189 the composition is skewed to basic and acidic residues. Phosphoserine occurs at positions 216, 246, and 256. The Ras-associating 2 domain maps to S246–P348. Positions K356–D371 are enriched in basic and acidic residues. The segment at K356–S377 is disordered. 2 positions are modified to phosphoserine: S391 and S424. The FHA domain maps to F441–V507. S512, S557, S562, S589, and S655 each carry phosphoserine. Positions D539 to A595 are disordered. The segment covering I576–T591 has biased composition (basic and acidic residues). Positions N668 to N915 constitute a Dilute domain. One can recognise a PDZ domain in the interval V1014–G1100. S1090, S1114, S1133, S1147, S1150, S1179, S1180, S1189, and S1206 each carry phosphoserine. Residues S1114–T1230 form a disordered region. The segment covering I1120–G1135 has biased composition (basic and acidic residues). Residues Y1139 to S1150 show a composition bias toward polar residues. Residues S1159–S1179 are compositionally biased toward basic and acidic residues. A compositionally biased stretch (polar residues) spans P1195–Q1217. 2 positions are modified to phosphothreonine: T1218 and T1239. A phosphoserine mark is found at S1245 and S1282. Residues E1300–S1309 show a composition bias toward basic and acidic residues. Disordered stretches follow at residues E1300–Q1533 and R1574–V1724. The segment covering S1316–S1325 has biased composition (low complexity). The span at S1332–K1344 shows a compositional bias: polar residues. A Phosphoserine modification is found at S1335. A Phosphothreonine modification is found at T1337. Residues L1371 to A1380 show a composition bias toward pro residues. Residues N1401 to A1412 show a composition bias toward low complexity. A compositionally biased stretch (basic and acidic residues) spans A1413–L1447. Residues K1417 to S1454 adopt a coiled-coil conformation. Positions M1450–A1464 are enriched in polar residues. A compositionally biased stretch (basic and acidic residues) spans T1494–L1510. Phosphoserine occurs at positions 1506 and 1517. Positions P1520–Q1533 are enriched in basic and acidic residues. Positions E1530–K1564 form a coiled coil. Residues E1583 to D1594 are compositionally biased toward acidic residues. The stretch at Q1600–Q1672 forms a coiled coil. A compositionally biased stretch (basic and acidic residues) spans L1602–E1682. A Phosphoserine modification is found at S1701. Polar residues predominate over residues R1715–V1724. S1726 carries the post-translational modification Phosphoserine. Residues D1742 to K1829 are disordered. Residues N1753–G1764 are compositionally biased toward polar residues. Over residues A1768–D1781 the composition is skewed to basic and acidic residues. Phosphoserine is present on residues S1779 and S1804. Residues V1809–K1829 show a composition bias toward basic and acidic residues. K1812 is subject to N6-acetyllysine.

Homodimer. Interacts with F-actin, nectin and NECTIN3. Essential for the association of nectin and E-cadherin. Isoform 2/s-afadin does not interact with F-actin. Interacts with ZO-1 and occludin, but probably in an indirect manner. Interacts with RIT1, RIT2, NRXN1 and BCR. Interacts with ADAM10; the interaction locks ADAM10 at adherens junctions following ADAM10 recruitment to adherens junctions by TSPAN33. Isoform 1 is widely expressed, including in heart, brain, spleen, lung, liver, skeletal muscle, kidney and testis. Isoform 2 is mainly expressed in the brain.

It is found in the cell junction. The protein localises to the adherens junction. In terms of biological role, belongs to an adhesion system, probably together with the E-cadherin-catenin system, which plays a role in the organization of homotypic, interneuronal and heterotypic cell-cell adherens junctions (AJs). Nectin- and actin-filament-binding protein that connects nectin to the actin cytoskeleton. May play a key role in the organization of epithelial structures of the embryonic ectoderm. Essential for the organization of adherens junctions. This chain is Afadin, found in Rattus norvegicus (Rat).